We begin with the raw amino-acid sequence, 243 residues long: Ribonuclease 3 (243 aa).

An RNase III domain is found at 10–146 (INRFRKRFDT…FIGALYLDQG (137 aa)). Glu-59 contributes to the Mg(2+) binding site. Residue Asp-63 is part of the active site. Residues Asp-132 and Glu-135 each contribute to the Mg(2+) site. Glu-135 is a catalytic residue. Residues 172 to 241 (DFKTQFQEYV…AESAYKQLKQ (70 aa)) form the DRBM domain. A compositionally biased stretch (basic and acidic residues) spans 219–231 (GKGKTKKESEQRA). Residues 219-243 (GKGKTKKESEQRAAESAYKQLKQIK) form a disordered region.

The protein belongs to the ribonuclease III family. Homodimer. Requires Mg(2+) as cofactor.

Its subcellular location is the cytoplasm. It carries out the reaction Endonucleolytic cleavage to 5'-phosphomonoester.. In terms of biological role, digests double-stranded RNA. Involved in the processing of primary rRNA transcript to yield the immediate precursors to the large and small rRNAs (23S and 16S). Processes some mRNAs, and tRNAs when they are encoded in the rRNA operon. Processes pre-crRNA and tracrRNA of type II CRISPR loci if present in the organism. This is Ribonuclease 3 from Staphylococcus aureus (strain bovine RF122 / ET3-1).